An 87-amino-acid chain; its full sequence is UPF0335 protein Avi_3695 (87 aa).

Belongs to the UPF0335 family.

The chain is UPF0335 protein Avi_3695 from Allorhizobium ampelinum (strain ATCC BAA-846 / DSM 112012 / S4) (Agrobacterium vitis (strain S4)).